The following is a 312-amino-acid chain: DNA-directed RNA polymerase subunit alpha (312 aa).

The segment at 1–229 (MLQYQIDRID…ELFQPLATVT (229 aa)) is alpha N-terminal domain (alpha-NTD). The tract at residues 246-312 (IPLEELNLSV…ISIPQSRTSV (67 aa)) is alpha C-terminal domain (alpha-CTD).

It belongs to the RNA polymerase alpha chain family. As to quaternary structure, in cyanobacteria the RNAP catalytic core is composed of 2 alpha, 1 beta, 1 beta', 1 gamma and 1 omega subunit. When a sigma factor is associated with the core the holoenzyme is formed, which can initiate transcription.

It catalyses the reaction RNA(n) + a ribonucleoside 5'-triphosphate = RNA(n+1) + diphosphate. Its function is as follows. DNA-dependent RNA polymerase catalyzes the transcription of DNA into RNA using the four ribonucleoside triphosphates as substrates. The protein is DNA-directed RNA polymerase subunit alpha of Prochlorococcus marinus subsp. pastoris (strain CCMP1986 / NIES-2087 / MED4).